Here is a 92-residue protein sequence, read N- to C-terminus: Large ribosomal subunit protein uL23c (92 aa).

It belongs to the universal ribosomal protein uL23 family. In terms of assembly, part of the 50S ribosomal subunit.

It localises to the plastid. It is found in the chloroplast. Its function is as follows. Binds to 23S rRNA. The protein is Large ribosomal subunit protein uL23c (rpl23) of Nephroselmis olivacea (Green alga).